The sequence spans 222 residues: Putative hemin import ATP-binding protein HrtA (222 aa).

The ABC transporter domain maps to 3–222; it reads LVVKDISKTF…QLYDGKIKNS (220 aa). ATP is bound at residue 39-46; the sequence is GASGSGKT.

It belongs to the ABC transporter superfamily. HrtA family. The complex is composed of two ATP-binding proteins (HrtA), two transmembrane proteins (HrtB) and a solute-binding protein.

Its subcellular location is the cell membrane. In terms of biological role, part of the ABC transporter complex hrt involved in hemin import. Responsible for energy coupling to the transport system. The polypeptide is Putative hemin import ATP-binding protein HrtA (hrtA) (Staphylococcus epidermidis (strain ATCC 35984 / DSM 28319 / BCRC 17069 / CCUG 31568 / BM 3577 / RP62A)).